The sequence spans 549 residues: Protein EPD2 (549 aa).

Residues 1–20 form the signal peptide; it reads MISVIKSLLTLSVLSTLAAA. Residue Asn-41 is glycosylated (N-linked (GlcNAc...) asparagine). Cys-82 and Cys-111 are disulfide-bonded. Asn-173 and Asn-261 each carry an N-linked (GlcNAc...) asparagine glycan. 5 disulfide bridges follow: Cys-224–Cys-358, Cys-242–Cys-273, Cys-381–Cys-432, Cys-390–Cys-456, and Cys-409–Cys-414. Asn-467 carries N-linked (GlcNAc...) asparagine glycosylation. The interval 470–518 is disordered; that stretch reads ASTSCSAAGGRGLQSGRRSSTTRGGSSSSRSSSSSSSSSTGSGSSNAGI. Low complexity predominate over residues 484 to 514; that stretch reads SGRRSSTTRGGSSSSRSSSSSSSSSTGSGSS.

Belongs to the glycosyl hydrolase 72 family.

The protein resides in the cell membrane. This is Protein EPD2 (EPD2) from Candida maltosa (Yeast).